The following is a 389-amino-acid chain: Chalcone synthase 1 (389 aa).

Cys164 is a catalytic residue.

This sequence belongs to the thiolase-like superfamily. Chalcone/stilbene synthases family.

The enzyme catalyses (E)-4-coumaroyl-CoA + 3 malonyl-CoA + 3 H(+) = 2',4,4',6'-tetrahydroxychalcone + 3 CO2 + 4 CoA. The protein operates within secondary metabolite biosynthesis; flavonoid biosynthesis. Its function is as follows. The primary product of this enzyme is 4,2',4',6'-tetrahydroxychalcone (also termed naringenin-chalcone or chalcone) which can under specific conditions spontaneously isomerize into naringenin. In Pisum sativum (Garden pea), this protein is Chalcone synthase 1 (CHS1).